We begin with the raw amino-acid sequence, 450 residues long: Glucose-6-phosphate isomerase (450 aa).

The Proton donor role is filled by glutamate 290. Catalysis depends on residues histidine 311 and lysine 425.

Belongs to the GPI family.

It localises to the cytoplasm. It carries out the reaction alpha-D-glucose 6-phosphate = beta-D-fructose 6-phosphate. The protein operates within carbohydrate biosynthesis; gluconeogenesis. Its pathway is carbohydrate degradation; glycolysis; D-glyceraldehyde 3-phosphate and glycerone phosphate from D-glucose: step 2/4. Its function is as follows. Catalyzes the reversible isomerization of glucose-6-phosphate to fructose-6-phosphate. This Listeria monocytogenes serovar 1/2a (strain ATCC BAA-679 / EGD-e) protein is Glucose-6-phosphate isomerase.